The following is a 285-amino-acid chain: Urease accessory protein UreD (285 aa).

Belongs to the UreD family. UreD, UreF and UreG form a complex that acts as a GTP-hydrolysis-dependent molecular chaperone, activating the urease apoprotein by helping to assemble the nickel containing metallocenter of UreC. The UreE protein probably delivers the nickel.

The protein resides in the cytoplasm. In terms of biological role, required for maturation of urease via the functional incorporation of the urease nickel metallocenter. The sequence is that of Urease accessory protein UreD from Cenarchaeum symbiosum (strain A).